Reading from the N-terminus, the 390-residue chain is Phosphopentomutase (390 aa).

Residues aspartate 12, aspartate 285, histidine 290, aspartate 326, histidine 327, and histidine 338 each coordinate Mn(2+).

It belongs to the phosphopentomutase family. Mn(2+) serves as cofactor.

It is found in the cytoplasm. It carries out the reaction 2-deoxy-alpha-D-ribose 1-phosphate = 2-deoxy-D-ribose 5-phosphate. It catalyses the reaction alpha-D-ribose 1-phosphate = D-ribose 5-phosphate. The protein operates within carbohydrate degradation; 2-deoxy-D-ribose 1-phosphate degradation; D-glyceraldehyde 3-phosphate and acetaldehyde from 2-deoxy-alpha-D-ribose 1-phosphate: step 1/2. Its function is as follows. Isomerase that catalyzes the conversion of deoxy-ribose 1-phosphate (dRib-1-P) and ribose 1-phosphate (Rib-1-P) to deoxy-ribose 5-phosphate (dRib-5-P) and ribose 5-phosphate (Rib-5-P), respectively. The chain is Phosphopentomutase from Brevibacillus brevis (strain 47 / JCM 6285 / NBRC 100599).